Reading from the N-terminus, the 316-residue chain is Porphobilinogen deaminase (316 aa).

An S-(dipyrrolylmethanemethyl)cysteine modification is found at Cys249.

The protein belongs to the HMBS family. As to quaternary structure, monomer. Dipyrromethane is required as a cofactor.

The enzyme catalyses 4 porphobilinogen + H2O = hydroxymethylbilane + 4 NH4(+). Its pathway is porphyrin-containing compound metabolism; protoporphyrin-IX biosynthesis; coproporphyrinogen-III from 5-aminolevulinate: step 2/4. Tetrapolymerization of the monopyrrole PBG into the hydroxymethylbilane pre-uroporphyrinogen in several discrete steps. In Nitrobacter hamburgensis (strain DSM 10229 / NCIMB 13809 / X14), this protein is Porphobilinogen deaminase.